The chain runs to 156 residues: Large ribosomal subunit protein uL22 (156 aa).

The segment at 114–156 is disordered; the sequence is VESRPKQEKGGKAGASKASSRAARAQGSKAAAAKKTESKGGTS. Residues 127–146 are compositionally biased toward low complexity; it reads GASKASSRAARAQGSKAAAA. A compositionally biased stretch (basic and acidic residues) spans 147 to 156; sequence KKTESKGGTS.

The protein belongs to the universal ribosomal protein uL22 family. As to quaternary structure, part of the 50S ribosomal subunit.

This protein binds specifically to 23S rRNA; its binding is stimulated by other ribosomal proteins, e.g. L4, L17, and L20. It is important during the early stages of 50S assembly. It makes multiple contacts with different domains of the 23S rRNA in the assembled 50S subunit and ribosome. Its function is as follows. The globular domain of the protein is located near the polypeptide exit tunnel on the outside of the subunit, while an extended beta-hairpin is found that lines the wall of the exit tunnel in the center of the 70S ribosome. This chain is Large ribosomal subunit protein uL22, found in Mycobacteroides abscessus (strain ATCC 19977 / DSM 44196 / CCUG 20993 / CIP 104536 / JCM 13569 / NCTC 13031 / TMC 1543 / L948) (Mycobacterium abscessus).